Reading from the N-terminus, the 405-residue chain is MGSYMNKTSVVKVGNVLIGGDNPVVVQSMTDTYTADVEKTVKQILALHKAGSEIVRITVNDEPAAAAVPEIVKELANHDCHVPLVGDFHYNGHTLLSKYPECAKALAKYRINPGNVGFGKKKDTQFAEIIKIAIANDKPVRIGVNWGSLDQALLARLIDENNAQENPLSLQQIMHKALITSALESAKYAEELGLAKDKIIISCKVSEVQDLIAVYQKLAKECDYALHLGLTEAGMGTKGIVASAVSLGILLQQGIGNTIRVSLTPAPNAPRTEEVRVCREILQNLGMRTFTPSVTSCPGCGRTTSSFFRELTSKVKDHLDEKMHTWKEQYHGVEAMKVAVMGCVVNGPGESKNADIGISLPGSGESPVAPVFIDGKKAHTLRGDNISEEFIEIVENYVKNRYGKK.

[4Fe-4S] cluster is bound by residues cysteine 297, cysteine 300, cysteine 343, and glutamate 350.

The protein belongs to the IspG family. [4Fe-4S] cluster serves as cofactor.

The enzyme catalyses (2E)-4-hydroxy-3-methylbut-2-enyl diphosphate + oxidized [flavodoxin] + H2O + 2 H(+) = 2-C-methyl-D-erythritol 2,4-cyclic diphosphate + reduced [flavodoxin]. It participates in isoprenoid biosynthesis; isopentenyl diphosphate biosynthesis via DXP pathway; isopentenyl diphosphate from 1-deoxy-D-xylulose 5-phosphate: step 5/6. Its function is as follows. Converts 2C-methyl-D-erythritol 2,4-cyclodiphosphate (ME-2,4cPP) into 1-hydroxy-2-methyl-2-(E)-butenyl 4-diphosphate. The polypeptide is 4-hydroxy-3-methylbut-2-en-1-yl diphosphate synthase (flavodoxin) (Francisella tularensis subsp. novicida (strain U112)).